The chain runs to 276 residues: Diaminopimelate epimerase (276 aa).

Residues Asn-13, Gln-46, and Asn-66 each coordinate substrate. Cys-75 acts as the Proton donor in catalysis. Residues 76 to 77 (GN), Asn-159, Asn-192, and 210 to 211 (ER) contribute to the substrate site. Cys-219 acts as the Proton acceptor in catalysis. A substrate-binding site is contributed by 220 to 221 (GT).

This sequence belongs to the diaminopimelate epimerase family. As to quaternary structure, homodimer.

Its subcellular location is the cytoplasm. It catalyses the reaction (2S,6S)-2,6-diaminopimelate = meso-2,6-diaminopimelate. Its pathway is amino-acid biosynthesis; L-lysine biosynthesis via DAP pathway; DL-2,6-diaminopimelate from LL-2,6-diaminopimelate: step 1/1. Functionally, catalyzes the stereoinversion of LL-2,6-diaminopimelate (L,L-DAP) to meso-diaminopimelate (meso-DAP), a precursor of L-lysine and an essential component of the bacterial peptidoglycan. The protein is Diaminopimelate epimerase of Ectopseudomonas mendocina (strain ymp) (Pseudomonas mendocina).